Reading from the N-terminus, the 337-residue chain is Heme A synthase (337 aa).

The next 5 membrane-spanning stretches (helical) occupy residues 6–26 (ITKW…IGGI), 87–107 (FIHR…LIYF), 119–139 (LPYI…WYMV), 154–174 (LAFH…QLIK), and 192–212 (LIFS…GALV). Histidine 256 provides a ligand contact to heme. Helical transmembrane passes span 258–278 (LGGY…LKIE), 285–305 (IAYF…ITLL), and 308–328 (VPII…SIII). Histidine 316 serves as a coordination point for heme.

This sequence belongs to the COX15/CtaA family. Type 2 subfamily. Interacts with CtaB. Heme b serves as cofactor.

Its subcellular location is the cell membrane. The catalysed reaction is Fe(II)-heme o + 2 A + H2O = Fe(II)-heme a + 2 AH2. It functions in the pathway porphyrin-containing compound metabolism; heme A biosynthesis; heme A from heme O: step 1/1. Catalyzes the conversion of heme O to heme A by two successive hydroxylations of the methyl group at C8. The first hydroxylation forms heme I, the second hydroxylation results in an unstable dihydroxymethyl group, which spontaneously dehydrates, resulting in the formyl group of heme A. The polypeptide is Heme A synthase (Rickettsia massiliae (strain Mtu5)).